Here is a 237-residue protein sequence, read N- to C-terminus: MAPVDIPDRDRLIVALDLPDLRVAEAMVDRLGDSVGFYKIGYQLAYAGGLPLARALVGAGKKVFVDLKLHDIGNTVARGVESLSHLGASFLTVHAYPQTMKAAVEARGSSKVKILAVTVLTSYDDRDLADAGYRFGVRDLVEARARQAQAIGVDGLVCSPEEAAHLRGIVGPEMDLVTPGIRPAGAAAGDQKRIMTPAKAIAAGASYLVVGRPVLDAPDPKAAADAIVAEIAAARGS.

Residues Asp17, Lys39, 66-75 (DLKLHDIGNT), Thr121, Arg182, Gln191, Gly211, and Arg212 contribute to the substrate site. The active-site Proton donor is Lys68.

This sequence belongs to the OMP decarboxylase family. Type 1 subfamily. As to quaternary structure, homodimer.

The catalysed reaction is orotidine 5'-phosphate + H(+) = UMP + CO2. It functions in the pathway pyrimidine metabolism; UMP biosynthesis via de novo pathway; UMP from orotate: step 2/2. Functionally, catalyzes the decarboxylation of orotidine 5'-monophosphate (OMP) to uridine 5'-monophosphate (UMP). The chain is Orotidine 5'-phosphate decarboxylase from Rhodopseudomonas palustris (strain TIE-1).